Consider the following 926-residue polypeptide: MSRRGGGPVTVLNVAEKPSVAKSVAGILSRGTFRTREGRSRYNKIFEFDYAINGQPCRMLMTSVIGHLMELEFADRYRKWHSCDPADLYQAPVMKHVPEDKKDIKKTLEEEARKSDWLVLWLDCDREGENIAFEVVDVCRAVKHNLFIRRAHFSALIDRDIHEAVQNLRDPNQLFAEAVDARQEIDLRIGASFTRFQTMLLRDRFAIDSTGEERSRVISYGPCQFPTLGFIVERYWEIQAHEPEEFWTINCSHQSEEGLATFNWMRGHLFDYASAVILYEMCVEEPTATVMNVPHPRERFKYPPYPLNTIELEKRASRYFRLSSEHTMKVAEELYQAGFISYPRTETDSFSSRTDLRAMVEEQTRHPAWGSYAQRLLEPEGGLWRNPANGGHDDKAHPPIHPTKFSSGESNWSRDHLNVYELVVRHYLACVSQPAVAAETTVEIDIAGERFSASGRAILAKNYLEVYRFESWGGSVIPVYEKGQQFIPTTLTLDAAVTRPPPLLCEADLLSCMDKAGIGTDATMHDHIKKLLDRGYATKDANTRFSPTNLGEALVMGYDDMGYELWKPNLRALMEHDMNEVSVGRKTKAEVLETCLQQMKACFLDARVKKSKLLEAMTIFFERSNNTDESESQTAGEVVRRCNLCNESDMALRKNRDGNFMVGCMNYPQCRNAVWLPGPTLEASVTTNVCQSCGPGPVYKILFKFRQIGIPPGFDVNHLGCVGGCDDILKQLIDICGTGSRSQARRTPGTAPSNNIQGSNTRQSNVCIHCQQRGHASTNCPSRVPASRNSRPTATNPRNDESTVSCNTCGSQCVLRTANTEANRGRQFFSCPTQGCSFFAWEDSINNSSGNATTGSNSGGSGRRGSRGRGRGGRGGQSSGGRRGSGTSFVSATGEPVSGIRCFSCGDPSHFANACPNRNNSNGNYF.

The 145-residue stretch at 10-154 (TVLNVAEKPS…NLFIRRAHFS (145 aa)) folds into the Toprim domain. Mg(2+)-binding residues include Glu16, Asp123, and Asp125. The Topo IA-type catalytic domain maps to 172 to 604 (NQLFAEAVDA…CLQQMKACFL (433 aa)). The interaction with DNA stretch occupies residues 219-224 (SYGPCQ). Catalysis depends on Tyr342, which acts as the O-(5'-phospho-DNA)-tyrosine intermediate. The segment at 642-670 (CNLCNESDMALRKNRDGNFMVGCMNYPQC) adopts a C4-type zinc-finger fold. Disordered regions lie at residues 740–760 (SRSQARRTPGTAPSNNIQGSN) and 775–806 (HASTNCPSRVPASRNSRPTATNPRNDESTVSC). Positions 750–760 (TAPSNNIQGSN) are enriched in polar residues. The segment at 767-782 (CIHCQQRGHASTNCPS) adopts a CCHC-type 1 zinc-finger fold. Zn(2+)-binding residues include Cys806, Cys809, Cys831, and Cys836. A GRF-type zinc finger spans residues 806–845 (CNTCGSQCVLRTANTEANRGRQFFSCPTQGCSFFAWEDSI). The disordered stretch occupies residues 849 to 890 (SGNATTGSNSGGSGRRGSRGRGRGGRGGQSSGGRRGSGTSFV). A compositionally biased stretch (gly residues) spans 873 to 884 (GRGGQSSGGRRG). A CCHC-type 2 zinc finger spans residues 901-917 (RCFSCGDPSHFANACPN).

It belongs to the type IA topoisomerase family. In terms of assembly, component of the RMI complex, containing at least TOP3A and RMI1. The RMI complex interacts with RECQL4A. The cofactor is Mg(2+).

The catalysed reaction is ATP-independent breakage of single-stranded DNA, followed by passage and rejoining.. Releases the supercoiling and torsional tension of DNA introduced during the DNA replication and transcription by transiently cleaving and rejoining one strand of the DNA duplex. Introduces a single-strand break via transesterification at a target site in duplex DNA. The scissile phosphodiester is attacked by the catalytic tyrosine of the enzyme, resulting in the formation of a DNA-(5'-phosphotyrosyl)-enzyme intermediate and the expulsion of a 3'-OH DNA strand. The free DNA strand then undergoes passage around the unbroken strand thus removing DNA supercoils. Finally, in the religation step, the DNA 3'-OH attacks the covalent intermediate to expel the active-site tyrosine and restore the DNA phosphodiester backbone. Essential component of the RMI complex, a complex that plays an important role in the resolution step of homologous recombination, in a process called Holliday Junction dissolution, to limit DNA crossover formation in cells. Together with RMI1, is essential for the resolution of meiotic recombination intermediates, a step that prevents entanglement of the parental chromosomes. May have DNA decatenation activity. This is DNA topoisomerase 3-alpha (TOP3A) from Arabidopsis thaliana (Mouse-ear cress).